A 232-amino-acid polypeptide reads, in one-letter code: UPF0758 protein BH3032 (232 aa).

One can recognise an MPN domain in the interval 107-229 (VIRTPEDVSR…FVSLKEKGHL (123 aa)). The Zn(2+) site is built by histidine 178, histidine 180, and aspartate 191. Positions 178–191 (HNHPSGDPTPSRED) match the JAMM motif motif.

The protein belongs to the UPF0758 family.

This is UPF0758 protein BH3032 from Halalkalibacterium halodurans (strain ATCC BAA-125 / DSM 18197 / FERM 7344 / JCM 9153 / C-125) (Bacillus halodurans).